The primary structure comprises 210 residues: MTKPTSAGQADDALVRLARERFDLPDQVRRLARPPVPSLEPPYGLRVAQLTDAEMLAEWMNRPHLAAAWEYDWPASRWRQHLNAQLEGTYSLPLIGSWHGTDGGYLELYWAAKDLISHYYDADPYDLGLHAAIADLSKVNRGFGPLLLPRIVASVFANEPRCRRIMFDPDHRNTATRRLCEWAGCKFLGEHDTTNRRMALYALEAPTTAA.

Substrate is bound at residue histidine 130. The active-site Proton acceptor is aspartate 168.

It belongs to the lysine N-acyltransferase MbtK family. As to quaternary structure, monomer.

It functions in the pathway siderophore biosynthesis; mycobactin biosynthesis. In terms of biological role, acyltransferase required for the direct transfer of medium- to long-chain fatty acyl moieties from a carrier protein (MbtL) on to the epsilon-amino group of lysine residue in the mycobactin core. This chain is Lysine N-acyltransferase MbtK (mbtK), found in Mycobacterium tuberculosis (strain CDC 1551 / Oshkosh).